The chain runs to 444 residues: L-cysteine:1D-myo-inositol 2-amino-2-deoxy-alpha-D-glucopyranoside ligase (444 aa).

Basic and acidic residues predominate over residues 1-13 (MPCDRKTSPDQHH). The disordered stretch occupies residues 1 to 21 (MPCDRKTSPDQHHALQIHRHH). C75 is a Zn(2+) binding site. L-cysteinyl-5'-AMP contacts are provided by residues 75-78 (CGIT), T90, and 113-115 (NIT). The 'HIGH' region signature appears at 77–87 (ITPYDATHLGH). The 'ERGGDP' region motif lies at 219 to 224 (ERGGDP). W259 provides a ligand contact to L-cysteinyl-5'-AMP. C263 contacts Zn(2+). 281–283 (GSD) lines the L-cysteinyl-5'-AMP pocket. Position 288 (H288) interacts with Zn(2+). I315 contacts L-cysteinyl-5'-AMP. Positions 321-325 (KMSKS) match the 'KMSKS' region motif.

Belongs to the class-I aminoacyl-tRNA synthetase family. MshC subfamily. Monomer. Zn(2+) serves as cofactor.

The catalysed reaction is 1D-myo-inositol 2-amino-2-deoxy-alpha-D-glucopyranoside + L-cysteine + ATP = 1D-myo-inositol 2-(L-cysteinylamino)-2-deoxy-alpha-D-glucopyranoside + AMP + diphosphate + H(+). Catalyzes the ATP-dependent condensation of GlcN-Ins and L-cysteine to form L-Cys-GlcN-Ins. This chain is L-cysteine:1D-myo-inositol 2-amino-2-deoxy-alpha-D-glucopyranoside ligase, found in Mycolicibacterium gilvum (strain PYR-GCK) (Mycobacterium gilvum (strain PYR-GCK)).